A 234-amino-acid chain; its full sequence is Large ribosomal subunit protein uL1c (234 aa).

Belongs to the universal ribosomal protein uL1 family. As to quaternary structure, part of the 50S ribosomal subunit.

It is found in the plastid. Its subcellular location is the chloroplast. Functionally, binds directly to 23S rRNA. Might be involved in E site tRNA release (Potential). The chain is Large ribosomal subunit protein uL1c (rpl1) from Rhodomonas salina (Cryptomonas salina).